A 461-amino-acid polypeptide reads, in one-letter code: MIPLIGQLYRNNNVVTSIHGRGLINRSVIAIMKAHRFARHRMADDAELSVHETFPILKAMSELKLGAASVDLGKMVAKFKAEGNGRSIEDFVKAELAEVAGKQNGDAREGTDVVLYGFGRIGRLLARILIEKTGGGDGLRLRAIVVRKGAENDLVKRASLLRRDSVHGPFDGTITIDEENNTLTANGNLIQVIYSNDPASIDYTQYGIKNALLVDNTGKWRDAEGLGQHLKCPGIDRVVLTAPGKGALKNIVHGINHTDIGADDKIISAASCTTNAIVPVLKAVNDQYGIVNGHVETVHSYTNDQNLIDNFHKGSRRGRSAPLNMVITKTGAATAAAKALPVLKGKLTGNAIRVPTPNVSMAILNLNLEKATTREEINEYLRQMAMHSDLQKQIDFVSSQEVVSTDFVGSRHAGVVDAEATICNDNRVVLYVWYDNEFGYSCQVVRVMEDMAGVNPPAFPR.

Residue T421 is modified to Phosphothreonine.

This sequence belongs to the glyceraldehyde-3-phosphate dehydrogenase family.

In Pseudomonas aeruginosa (strain UCBPP-PA14), this protein is Glyceraldehyde-3-phosphate dehydrogenase-like protein (gap2).